A 689-amino-acid polypeptide reads, in one-letter code: Outer spore wall assembly protein SHE10 (689 aa).

The signal sequence occupies residues 1–18; it reads MKILTKFFLLLVVTTCSL. The tract at residues 259–308 is disordered; the sequence is TKAKSKSKPRVNASASARGNARAGAKAGAKAGTSEISASATADPTTSASA. A compositionally biased stretch (low complexity) spans 270–308; that stretch reads NASASARGNARAGAKAGAKAGTSEISASATADPTTSASA. A coiled-coil region spans residues 406–435; the sequence is NKTKTVSEVLQNRYKNLNRAIQDINCTCET. Residues 610 to 626 show a composition bias toward basic and acidic residues; sequence EQESKQREDSPRMDRDS. Residues 610–689 form a disordered region; it reads EQESKQREDS…TVQNNVTLQI (80 aa). Composition is skewed to polar residues over residues 627–637, 655–670, and 677–689; these read TQNVENSNTTT, QNGT…GPDS, and METT…TLQI.

It belongs to the SHE10 family. As to quaternary structure, component of the mitochondria-localized RNase mitochondrial RNA-processing (RNase MRP) composed of one single RNA encoded by the NME1 gene and at least 31 proteins. Absent in the nucleus-localized RNase MRP (NuMRP).

Its subcellular location is the mitochondrion. In terms of biological role, involved in spore wall assembly. May be a component of the mitochondrial RNase MRP (MtMRP), a ribonucleoprotein endoribonuclease involved in the cleaving RNA transcripts to generate primers for DNA replication in mitochondria. The chain is Outer spore wall assembly protein SHE10 from Zygosaccharomyces rouxii (strain ATCC 2623 / CBS 732 / NBRC 1130 / NCYC 568 / NRRL Y-229).